Consider the following 287-residue polypeptide: Hypersensitive-induced response protein-like protein 2 (287 aa).

The N-myristoyl glycine moiety is linked to residue glycine 2.

Its function is as follows. Positive regulator of hypersensitive response (HR)-like cell death. May be involved in potassium ion channel regulation. The chain is Hypersensitive-induced response protein-like protein 2 (HIRL2) from Oryza sativa subsp. japonica (Rice).